Consider the following 274-residue polypeptide: NH(3)-dependent NAD(+) synthetase (274 aa).

46–53 (GISGGQDS) is an ATP binding site. D52 is a binding site for Mg(2+). R140 serves as a coordination point for deamido-NAD(+). T160 contacts ATP. Residue E165 participates in Mg(2+) binding. Deamido-NAD(+) contacts are provided by K173 and D180. ATP-binding residues include K189 and T211. Residue 260-261 (HK) coordinates deamido-NAD(+).

Belongs to the NAD synthetase family. Homodimer.

The catalysed reaction is deamido-NAD(+) + NH4(+) + ATP = AMP + diphosphate + NAD(+) + H(+). It functions in the pathway cofactor biosynthesis; NAD(+) biosynthesis; NAD(+) from deamido-NAD(+) (ammonia route): step 1/1. In terms of biological role, catalyzes the ATP-dependent amidation of deamido-NAD to form NAD. Uses ammonia as a nitrogen source. The polypeptide is NH(3)-dependent NAD(+) synthetase (Streptococcus mutans serotype c (strain ATCC 700610 / UA159)).